A 377-amino-acid chain; its full sequence is Nitric oxide reductase FlRd-NAD(+) reductase (377 aa).

It belongs to the FAD-dependent oxidoreductase family. FAD serves as cofactor.

The protein localises to the cytoplasm. It catalyses the reaction 2 reduced [nitric oxide reductase rubredoxin domain] + NAD(+) + H(+) = 2 oxidized [nitric oxide reductase rubredoxin domain] + NADH. It functions in the pathway nitrogen metabolism; nitric oxide reduction. Its function is as follows. One of at least two accessory proteins for anaerobic nitric oxide (NO) reductase. Reduces the rubredoxin moiety of NO reductase. In Salmonella typhi, this protein is Nitric oxide reductase FlRd-NAD(+) reductase.